The primary structure comprises 875 residues: Probable serine/threonine-protein kinase samkC (875 aa).

The segment covering Met-1–Asp-12 has biased composition (polar residues). A disordered region spans residues Met-1–Asn-47. A compositionally biased stretch (low complexity) spans Asn-13–Asn-45. Residues Trp-51 to Phe-116 form the SAM domain. Residues Asp-135–Asn-162 are a coiled coil. Positions Asn-136–Asn-168 are enriched in low complexity. Positions Asn-136–Thr-170 are disordered. Positions Tyr-181–Phe-452 constitute a Protein kinase domain. Residues Met-187–Leu-195 and Lys-210 each bind ATP. Asp-301 functions as the Proton acceptor in the catalytic mechanism. Disordered regions lie at residues Asn-331 to Asn-362 and Ser-461 to Asn-718. Residues Pro-474–Ser-554 show a composition bias toward low complexity. Residues Glu-555 to Lys-564 are compositionally biased toward pro residues. 3 stretches are compositionally biased toward low complexity: residues Pro-565–Ser-581, Gln-589–Thr-611, and Gln-617–Lys-653. A coiled-coil region spans residues Gln-626–Lys-655. Residues Ser-654–Pro-663 are compositionally biased toward basic and acidic residues. Residues Glu-664–Asn-718 are compositionally biased toward low complexity. The helical transmembrane segment at Thr-842–Leu-862 threads the bilayer.

The protein belongs to the protein kinase superfamily. Ser/Thr protein kinase family.

It is found in the membrane. The enzyme catalyses L-seryl-[protein] + ATP = O-phospho-L-seryl-[protein] + ADP + H(+). The catalysed reaction is L-threonyl-[protein] + ATP = O-phospho-L-threonyl-[protein] + ADP + H(+). The sequence is that of Probable serine/threonine-protein kinase samkC (samkC) from Dictyostelium discoideum (Social amoeba).